Consider the following 205-residue polypeptide: Ribosomal RNA large subunit methyltransferase E (205 aa).

S-adenosyl-L-methionine-binding residues include glycine 60, tryptophan 62, aspartate 80, aspartate 96, and aspartate 121. Lysine 161 functions as the Proton acceptor in the catalytic mechanism.

The protein belongs to the class I-like SAM-binding methyltransferase superfamily. RNA methyltransferase RlmE family.

The protein resides in the cytoplasm. It catalyses the reaction uridine(2552) in 23S rRNA + S-adenosyl-L-methionine = 2'-O-methyluridine(2552) in 23S rRNA + S-adenosyl-L-homocysteine + H(+). Its function is as follows. Specifically methylates the uridine in position 2552 of 23S rRNA at the 2'-O position of the ribose in the fully assembled 50S ribosomal subunit. This Dechloromonas aromatica (strain RCB) protein is Ribosomal RNA large subunit methyltransferase E.